Consider the following 705-residue polypeptide: ATP-dependent DNA helicase Q-like 2 (705 aa).

The stretch at 1–30 (MESEAIQEDLQNLDVELKDVQGQISALIEH) forms a coiled coil. The Helicase ATP-binding domain maps to 98 to 273 (INAIMTGRDV…IEMLHIPKCV (176 aa)). Residue 111-118 (MAAGGGKS) coordinates ATP. The short motif at 217–220 (DEAH) is the DEAH box element. A Helicase C-terminal domain is found at 298 to 450 (VVDEIAEFIR…DIVRYCQSKT (153 aa)). The HRDC domain maps to 591–670 (SITFSGLELK…MRHEAVSEQL (80 aa)). The disordered stretch occupies residues 668-705 (EQLVEDPTKEETCKSRLRKRAKTQKDVVLVESSGEEEA).

It belongs to the helicase family. RecQ subfamily. As to quaternary structure, interacts with WEX. Mg(2+) serves as cofactor. Mn(2+) is required as a cofactor. In terms of tissue distribution, expressed in shoots and flowers. Expressed in young leaves, inflorescences, roots, shoot apical meristem, young siliques, and mature green siliques.

It localises to the nucleus. The enzyme catalyses Couples ATP hydrolysis with the unwinding of duplex DNA by translocating in the 3'-5' direction.. It carries out the reaction ATP + H2O = ADP + phosphate + H(+). Its function is as follows. 3'-5' DNA helicase that may play a role in the repair of DNA. Its DNA unwinding activity in vitro is dependent on magnesium, and ATP or dATP. Can use GTP/dGTP, CTP/dCTP or UTP/dUTP as nucleotide cofactors. Catalyzes Holliday junction branch migration and replication fork regression. Disrupts D-loop structures. Unwinds G-quadruplex DNA, found in telomeric DNA. The protein is ATP-dependent DNA helicase Q-like 2 of Arabidopsis thaliana (Mouse-ear cress).